Consider the following 125-residue polypeptide: Small ribosomal subunit protein uS13 (125 aa).

The protein belongs to the universal ribosomal protein uS13 family. Part of the 30S ribosomal subunit. Forms a loose heterodimer with protein S19. Forms two bridges to the 50S subunit in the 70S ribosome.

Its function is as follows. Located at the top of the head of the 30S subunit, it contacts several helices of the 16S rRNA. In the 70S ribosome it contacts the 23S rRNA (bridge B1a) and protein L5 of the 50S subunit (bridge B1b), connecting the 2 subunits; these bridges are implicated in subunit movement. Contacts the tRNAs in the A and P-sites. This Rickettsia massiliae (strain Mtu5) protein is Small ribosomal subunit protein uS13.